We begin with the raw amino-acid sequence, 156 residues long: ATP synthase subunit b (156 aa).

Residues 7–27 (IFFQMLVFFVLGWFTMKFVWP) traverse the membrane as a helical segment.

This sequence belongs to the ATPase B chain family. As to quaternary structure, F-type ATPases have 2 components, F(1) - the catalytic core - and F(0) - the membrane proton channel. F(1) has five subunits: alpha(3), beta(3), gamma(1), delta(1), epsilon(1). F(0) has three main subunits: a(1), b(2) and c(10-14). The alpha and beta chains form an alternating ring which encloses part of the gamma chain. F(1) is attached to F(0) by a central stalk formed by the gamma and epsilon chains, while a peripheral stalk is formed by the delta and b chains.

The protein localises to the cell inner membrane. Functionally, f(1)F(0) ATP synthase produces ATP from ADP in the presence of a proton or sodium gradient. F-type ATPases consist of two structural domains, F(1) containing the extramembraneous catalytic core and F(0) containing the membrane proton channel, linked together by a central stalk and a peripheral stalk. During catalysis, ATP synthesis in the catalytic domain of F(1) is coupled via a rotary mechanism of the central stalk subunits to proton translocation. Component of the F(0) channel, it forms part of the peripheral stalk, linking F(1) to F(0). This Bordetella bronchiseptica (strain ATCC BAA-588 / NCTC 13252 / RB50) (Alcaligenes bronchisepticus) protein is ATP synthase subunit b.